The following is a 168-amino-acid chain: G/U mismatch-specific DNA glycosylase (168 aa).

Belongs to the uracil-DNA glycosylase (UDG) superfamily. TDG/mug family. As to quaternary structure, binds DNA as a monomer.

It localises to the cytoplasm. The catalysed reaction is Specifically hydrolyzes mismatched double-stranded DNA and polynucleotides, releasing free uracil.. Its function is as follows. Excises ethenocytosine and uracil, which can arise by alkylation or deamination of cytosine, respectively, from the corresponding mispairs with guanine in ds-DNA. It is capable of hydrolyzing the carbon-nitrogen bond between the sugar-phosphate backbone of the DNA and the mispaired base. The complementary strand guanine functions in substrate recognition. Required for DNA damage lesion repair in stationary-phase cells. The polypeptide is G/U mismatch-specific DNA glycosylase (Citrobacter koseri (strain ATCC BAA-895 / CDC 4225-83 / SGSC4696)).